A 281-amino-acid polypeptide reads, in one-letter code: Probable endonuclease 4 (281 aa).

9 residues coordinate Zn(2+): H67, H107, E144, D178, H181, H215, D228, H230, and E260.

It belongs to the AP endonuclease 2 family. Zn(2+) serves as cofactor.

The catalysed reaction is Endonucleolytic cleavage to 5'-phosphooligonucleotide end-products.. Its function is as follows. Endonuclease IV plays a role in DNA repair. It cleaves phosphodiester bonds at apurinic or apyrimidinic (AP) sites, generating a 3'-hydroxyl group and a 5'-terminal sugar phosphate. The polypeptide is Probable endonuclease 4 (Methanocorpusculum labreanum (strain ATCC 43576 / DSM 4855 / Z)).